The sequence spans 301 residues: Probable alpha-L-glutamate ligase (301 aa).

Positions 104-287 (LQLLSRRGIG…VAGMIIGYLE (184 aa)) constitute an ATP-grasp domain. Residues Lys141, 178–179 (EY), Asp187, and 211–213 (RSN) contribute to the ATP site. Positions 248, 260, and 262 each coordinate Mg(2+). The Mn(2+) site is built by Asp248, Glu260, and Asn262.

It belongs to the RimK family. The cofactor is Mg(2+). Requires Mn(2+) as cofactor.

The protein is Probable alpha-L-glutamate ligase of Pseudomonas syringae pv. syringae (strain B728a).